The chain runs to 248 residues: Pyridoxine 5'-phosphate synthase (248 aa).

3-amino-2-oxopropyl phosphate is bound at residue asparagine 10. 12–13 (DH) is a 1-deoxy-D-xylulose 5-phosphate binding site. Position 21 (arginine 21) interacts with 3-amino-2-oxopropyl phosphate. Catalysis depends on histidine 46, which acts as the Proton acceptor. Arginine 48 and histidine 53 together coordinate 1-deoxy-D-xylulose 5-phosphate. The Proton acceptor role is filled by glutamate 73. Residue threonine 103 participates in 1-deoxy-D-xylulose 5-phosphate binding. The active-site Proton donor is the histidine 194. Residues glycine 195 and 216-217 (GH) each bind 3-amino-2-oxopropyl phosphate.

The protein belongs to the PNP synthase family. In terms of assembly, homooctamer; tetramer of dimers.

The protein resides in the cytoplasm. The enzyme catalyses 3-amino-2-oxopropyl phosphate + 1-deoxy-D-xylulose 5-phosphate = pyridoxine 5'-phosphate + phosphate + 2 H2O + H(+). It participates in cofactor biosynthesis; pyridoxine 5'-phosphate biosynthesis; pyridoxine 5'-phosphate from D-erythrose 4-phosphate: step 5/5. In terms of biological role, catalyzes the complicated ring closure reaction between the two acyclic compounds 1-deoxy-D-xylulose-5-phosphate (DXP) and 3-amino-2-oxopropyl phosphate (1-amino-acetone-3-phosphate or AAP) to form pyridoxine 5'-phosphate (PNP) and inorganic phosphate. The protein is Pyridoxine 5'-phosphate synthase of Legionella pneumophila (strain Corby).